The following is a 229-amino-acid chain: Potassium/proton antiporter CemA (229 aa).

2 helical membrane passes run 7–27 (LASL…SISF) and 106–126 (IISH…YFIL).

This sequence belongs to the CemA family.

It localises to the plastid. The protein localises to the chloroplast inner membrane. The catalysed reaction is K(+)(in) + H(+)(out) = K(+)(out) + H(+)(in). Contributes to K(+)/H(+) antiport activity by supporting proton efflux to control proton extrusion and homeostasis in chloroplasts in a light-dependent manner to modulate photosynthesis. Prevents excessive induction of non-photochemical quenching (NPQ) under continuous-light conditions. Indirectly promotes efficient inorganic carbon uptake into chloroplasts. The polypeptide is Potassium/proton antiporter CemA (Cycas taitungensis (Prince sago)).